We begin with the raw amino-acid sequence, 651 residues long: Histone-lysine N-methyltransferase family member SUVH2 (651 aa).

The tract at residues 1–28 is disordered; it reads MSTLLPFPDLNLMPDSQSSTAGTTAGDT. Residues 15-28 show a composition bias toward low complexity; it reads DSQSSTAGTTAGDT. The 157-residue stretch at 202 to 358 folds into the YDG domain; it reads DKHIVGPVTG…KFRLVRIEGQ (157 aa). Residues 434–492 form the Pre-SET domain; that stretch reads TGCECKLSCTDDCLCARKNGGEFAYDDNGHLLKGKHVVFECGEFCTCGPSCKSRVTQKG. Zn(2+) is bound by residues Cys-436, Cys-438, Cys-442, Cys-446, Cys-448, Cys-474, Cys-478, Cys-480, and Cys-484. Positions 495–638 constitute an SET domain; that stretch reads NRLEVFRSKE…PLAELSLDYG (144 aa).

Belongs to the class V-like SAM-binding methyltransferase superfamily. Histone-lysine methyltransferase family. Suvar3-9 subfamily. In terms of assembly, self-interacts. Interacts with DNA-directed RNA polymerase V subunit NRPE1 and with DRD1 and DMS3. Binds to MORC1/CRT1. In terms of tissue distribution, expressed at low levels in leaves stems and flowers.

The protein resides in the nucleus. The protein localises to the chromosome. It localises to the centromere. Functionally, histone methyltransferase family member that plays a central role in gene silencing. Together with MORC6 and SUVH9, regulates the silencing of some transposable elements (TEs). According to PubMed:15775980, it is required for normal methylation of 'Lys-9' and 'Lys-27' of histone H3, 'Lys-20' of H4, and cytosine, but PubMed:19043555 see no significant effect on histone methylation when the gene is mutated. According to PubMed:19043555, the protein does not bind S-adenosyl-L-methionine and lacks methyltransferase activity. Instead, it may function downstream of DRM2 in RNA-directed DNA methylation, binding to methylated DNA and recruiting DNA-directed RNA polymerase V to chromatin. The sequence is that of Histone-lysine N-methyltransferase family member SUVH2 (SUVH2) from Arabidopsis thaliana (Mouse-ear cress).